Consider the following 241-residue polypeptide: Uridylate kinase (241 aa).

Lys-15–Gly-18 contributes to the ATP binding site. Gly-57 is a UMP binding site. Positions 58 and 62 each coordinate ATP. UMP-binding positions include Asp-77 and Ile-139–Thr-146. ATP is bound by residues Thr-166, Asn-167, Phe-172, and Asp-175.

This sequence belongs to the UMP kinase family. In terms of assembly, homohexamer.

It is found in the cytoplasm. The enzyme catalyses UMP + ATP = UDP + ADP. It participates in pyrimidine metabolism; CTP biosynthesis via de novo pathway; UDP from UMP (UMPK route): step 1/1. Its activity is regulated as follows. Inhibited by UTP. Functionally, catalyzes the reversible phosphorylation of UMP to UDP. This chain is Uridylate kinase, found in Wigglesworthia glossinidia brevipalpis.